We begin with the raw amino-acid sequence, 248 residues long: Triosephosphate isomerase (248 aa).

Residue 9–11 (NWK) coordinates substrate. His94 serves as the catalytic Electrophile. Glu166 acts as the Proton acceptor in catalysis. Residues Gly172, Ser212, and 233–234 (GG) each bind substrate.

It belongs to the triosephosphate isomerase family. In terms of assembly, homodimer.

It localises to the cytoplasm. The catalysed reaction is D-glyceraldehyde 3-phosphate = dihydroxyacetone phosphate. Its pathway is carbohydrate biosynthesis; gluconeogenesis. It participates in carbohydrate degradation; glycolysis; D-glyceraldehyde 3-phosphate from glycerone phosphate: step 1/1. Involved in the gluconeogenesis. Catalyzes stereospecifically the conversion of dihydroxyacetone phosphate (DHAP) to D-glyceraldehyde-3-phosphate (G3P). In Clostridium botulinum (strain Loch Maree / Type A3), this protein is Triosephosphate isomerase.